Consider the following 629-residue polypeptide: Embryonic polyadenylate-binding protein (629 aa).

RRM domains follow at residues 11 to 89 (ASLY…WSQR), 99 to 175 (GNVF…HFKS), 191 to 268 (TNVY…RAQK), and 294 to 370 (VNLY…LAQR). The PABC domain maps to 539–616 (QEPLTASSLA…AVAVLQAHQA (78 aa)).

The protein belongs to the polyadenylate-binding protein type-1 family. In terms of assembly, interacts with dazl in an RNA-independent manner. The C-terminus can self-associate and also interact with the C-terminus of pabpc1, independently of RNA. RRM 1 and RRM 2 interact with both eif4g1 and paip1, and the C-terminus also interacts with paip1. Prior to oocyte maturation, found in a complex with dazl and pum2 proteins and spdy1 mRNA; pum2 dissociates from the complex during maturation. Interacts with the translation termination factor sup35/erf3.

It localises to the cytoplasm. Binds and protects the poly(A) tail of mRNA with or without an AU-rich element (ARE) and prevents mRNA deadenylation. Stimulates the translation of mRNAs to which it is bound during early development. This Xenopus tropicalis (Western clawed frog) protein is Embryonic polyadenylate-binding protein.